The chain runs to 126 residues: Fluoride-specific ion channel FluC (126 aa).

4 helical membrane-spanning segments follow: residues 4-24, 33-53, 67-87, and 97-117; these read PLLSIALGSVLGAWLRWFLGL, IPLGTVTVNLVGGFIIGFAMA, FVITGFCGALTTFSTFSIEIV, and MAMLAISIHLIGSLIFTCLGL. The Na(+) site is built by Gly-74 and Thr-77.

The protein belongs to the fluoride channel Fluc/FEX (TC 1.A.43) family.

It is found in the cell inner membrane. The enzyme catalyses fluoride(in) = fluoride(out). With respect to regulation, na(+) is not transported, but it plays an essential structural role and its presence is essential for fluoride channel function. Functionally, fluoride-specific ion channel. Important for reducing fluoride concentration in the cell, thus reducing its toxicity. The protein is Fluoride-specific ion channel FluC of Acinetobacter baumannii (strain SDF).